The chain runs to 288 residues: Energy-coupling factor transporter ATP-binding protein EcfA2 (288 aa).

The ABC transporter domain occupies 2 to 244 (IKFEKVNYTY…VDFLKAHELG (243 aa)). ATP is bound at residue 39 to 46 (GHTGSGKS). Glutamate 170 (proton acceptor) is an active-site residue.

The protein belongs to the ABC transporter superfamily. Energy-coupling factor EcfA family. Forms a stable energy-coupling factor (ECF) transporter complex composed of 2 membrane-embedded substrate-binding proteins (S component), 2 ATP-binding proteins (A component) and 2 transmembrane proteins (T component). In L.lactis forms a stable complex with EcfA' and EcfT and substrate-binding components. In E.coli forms a stable complex with EcfA, EcfT and individually with 3 tested substrate-binding components (BioY, NiaX and ThiT) with a stoichiometry of 1.1:1:1. The core ECF complex interacts with a number of substrate-specific binding components, including BioY, BioY2, HmpT, NiaX, PanT, QueT, RibU and ThiT.

It localises to the cell membrane. Its function is as follows. ATP-binding (A) component of a common energy-coupling factor (ECF) ABC-transporter complex. Unlike classic ABC transporters this ECF transporter provides the energy necessary to transport a number of different substrates. In this organism these probably include biotin, thiamine precursor, niacin, pantothenic acid, queuosine precursor, riboflavin and thiamine. Uptake of niacin or riboflavin into proteosomes containing EcfA1A2T and Niax or RibU has been demonstrated. Uptake requires hydrolyzable Mg-ATP and is substrate-specific; NiaX-containing proteosomes did not transport riboflavin. The protein is Energy-coupling factor transporter ATP-binding protein EcfA2 of Lactococcus lactis subsp. cremoris (strain MG1363).